The primary structure comprises 349 residues: Hydroxymethylglutaryl-CoA synthase (349 aa).

Residues Asp-30 and Ala-31 each coordinate (3S)-3-hydroxy-3-methylglutaryl-CoA. Glu-82 functions as the Proton donor/acceptor in the catalytic mechanism. (3S)-3-hydroxy-3-methylglutaryl-CoA is bound by residues Cys-114 and Thr-155. The Acyl-thioester intermediate role is filled by Cys-114. Residue Arg-203 coordinates CoA. (3S)-3-hydroxy-3-methylglutaryl-CoA contacts are provided by Thr-205 and His-238. His-238 (proton donor/acceptor) is an active-site residue. Lys-243 is a binding site for CoA. 2 residues coordinate (3S)-3-hydroxy-3-methylglutaryl-CoA: Asn-270 and Ser-300.

This sequence belongs to the thiolase-like superfamily. Archaeal HMG-CoA synthase family. As to quaternary structure, interacts with acetoacetyl-CoA thiolase that catalyzes the precedent step in the pathway and with a DUF35 protein. The acetoacetyl-CoA thiolase/HMG-CoA synthase complex channels the intermediate via a fused CoA-binding site, which allows for efficient coupling of the endergonic thiolase reaction with the exergonic HMGCS reaction.

It catalyses the reaction acetoacetyl-CoA + acetyl-CoA + H2O = (3S)-3-hydroxy-3-methylglutaryl-CoA + CoA + H(+). It functions in the pathway metabolic intermediate biosynthesis; (R)-mevalonate biosynthesis; (R)-mevalonate from acetyl-CoA: step 2/3. In terms of biological role, catalyzes the condensation of acetyl-CoA with acetoacetyl-CoA to form 3-hydroxy-3-methylglutaryl-CoA (HMG-CoA). Functions in the mevalonate (MVA) pathway leading to isopentenyl diphosphate (IPP), a key precursor for the biosynthesis of isoprenoid compounds that are building blocks of archaeal membrane lipids. This is Hydroxymethylglutaryl-CoA synthase from Methanococcus maripaludis (strain C7 / ATCC BAA-1331).